The primary structure comprises 390 residues: Chorismate synthase (390 aa).

NADP(+) contacts are provided by Arg-39 and Arg-45. Residues 132–134 (RSS), 253–254 (NA), Gly-298, 313–317 (KPIPT), and Arg-339 each bind FMN.

It belongs to the chorismate synthase family. Homotetramer. It depends on FMNH2 as a cofactor.

It carries out the reaction 5-O-(1-carboxyvinyl)-3-phosphoshikimate = chorismate + phosphate. Its pathway is metabolic intermediate biosynthesis; chorismate biosynthesis; chorismate from D-erythrose 4-phosphate and phosphoenolpyruvate: step 7/7. In terms of biological role, catalyzes the anti-1,4-elimination of the C-3 phosphate and the C-6 proR hydrogen from 5-enolpyruvylshikimate-3-phosphate (EPSP) to yield chorismate, which is the branch point compound that serves as the starting substrate for the three terminal pathways of aromatic amino acid biosynthesis. This reaction introduces a second double bond into the aromatic ring system. The chain is Chorismate synthase from Bacillus licheniformis (strain ATCC 14580 / DSM 13 / JCM 2505 / CCUG 7422 / NBRC 12200 / NCIMB 9375 / NCTC 10341 / NRRL NRS-1264 / Gibson 46).